The chain runs to 499 residues: MVFSSNVFLFLFLPLFLGLYYLSPARYRNLLLLTASYVFYAWWRIDFLGLFAAVTVFNYWIGLRIGAAGVRTQSAQRWLTLGVVVDLCVLGYFKYANFGVDSLNAIITSFGVEPFVVTHILLPIGISFYVFESISYIIDVYRGDTPATRNLVDFAAFVAIFPHLIAGPVLRFRDLVDQFNHRTHTLDKFAEGCTRFMQGFIKKVFIADSLAPIADHCFALSDPTTGDAWLGALAYTAQLYFDFSGYSDMAIGLGLMIGFRFMENFNQPYISQSITEFWRRWHISLSTWLRDYLYISLGGNRGTTFQTYRNLILTMLLGGLWHGANWTFIIWGAWHGTWLAIERALRIDAAPKTIRPLRWVFAFLLVMVGWVIFRAENLDVAWRMYAAMFSFGDWTLSDLNKAQLTSLQIATLLLAYVVIAVYGIRQFYAQPLTGAPKAKANDQADAPQGIVHASSGTLAYSQAIDIPALATRVAVLLLFAASVLKLSAQSFSPFLYFQF.

Helical transmembrane passes span V7–A25, Y40–G62, W78–V100, F115–I137, N150–F172, L239–F261, I312–W334, I354–F373, V380–S397, L407–A429, and V475–F497. Residue H322 is part of the active site.

Belongs to the membrane-bound acyltransferase family.

It is found in the cell inner membrane. Its pathway is glycan biosynthesis; alginate biosynthesis. Its function is as follows. Together with AlgJ and AlgF, forms an inner membrane complex which probably interacts with the alginate polymerization-transport complex and adds acetyl groups at the O-2 and O-3 positions of mannuronate residues. Acetylation of alginate increases cyst resistance to desiccation. The protein is Probable alginate O-acetylase AlgI (algI) of Azotobacter vinelandii.